The primary structure comprises 69 residues: Large ribosomal subunit protein bL31 (69 aa).

Zn(2+)-binding residues include cysteine 16, cysteine 18, cysteine 38, and cysteine 41.

It belongs to the bacterial ribosomal protein bL31 family. Type A subfamily. In terms of assembly, part of the 50S ribosomal subunit. Zn(2+) is required as a cofactor.

Functionally, binds the 23S rRNA. This Thermobifida fusca (strain YX) protein is Large ribosomal subunit protein bL31.